A 46-amino-acid chain; its full sequence is Major cold shock protein (46 aa).

The 46-residue stretch at 1–46 folds into the CSD domain; the sequence is EKGFGFLTQNNGGADVFVHFRAIASEGFKTLTEGQKVSFDVEQGQK.

Homodimer.

Its subcellular location is the cytoplasm. The sequence is that of Major cold shock protein (cspA) from Photobacterium leiognathi subsp. mandapamensis (Photobacterium mandapamensis).